The chain runs to 631 residues: tRNA uridine 5-carboxymethylaminomethyl modification enzyme MnmG (631 aa).

An FAD-binding site is contributed by 15 to 20; that stretch reads GAGHAG. The interval 214–233 is disordered; it reads YSKTEEEPGDKEPRHFSFTS. 276-290 contributes to the NAD(+) binding site; sequence GPRYCPSIETKVVRF.

Belongs to the MnmG family. As to quaternary structure, homodimer. Heterotetramer of two MnmE and two MnmG subunits. Requires FAD as cofactor.

The protein localises to the cytoplasm. In terms of biological role, NAD-binding protein involved in the addition of a carboxymethylaminomethyl (cmnm) group at the wobble position (U34) of certain tRNAs, forming tRNA-cmnm(5)s(2)U34. The chain is tRNA uridine 5-carboxymethylaminomethyl modification enzyme MnmG from Lactobacillus delbrueckii subsp. bulgaricus (strain ATCC 11842 / DSM 20081 / BCRC 10696 / JCM 1002 / NBRC 13953 / NCIMB 11778 / NCTC 12712 / WDCM 00102 / Lb 14).